A 244-amino-acid polypeptide reads, in one-letter code: Mitochondrial inner membrane protease atp23 (244 aa).

Positions 1 to 25 (MSSSEGNKPPLVPDSTKESEPQFDP) are disordered. His-144 provides a ligand contact to a divalent metal cation. Residue Glu-145 is part of the active site. His-148 contacts a divalent metal cation.

It belongs to the peptidase M76 family.

The protein localises to the mitochondrion inner membrane. Has a dual role in the assembly of mitochondrial ATPase. Acts as a protease that removes N-terminal residues of mitochondrial ATPase CF(0) subunit 6 at the intermembrane space side. Also involved in the correct assembly of the membrane-embedded ATPase CF(0) particle, probably mediating association of subunit 6 with the subunit 9 ring. In Botryotinia fuckeliana (strain B05.10) (Noble rot fungus), this protein is Mitochondrial inner membrane protease atp23 (atp23).